The primary structure comprises 308 residues: Ribosomal RNA small subunit methyltransferase H (308 aa).

S-adenosyl-L-methionine is bound by residues 32–34 (GGH), aspartate 52, phenylalanine 78, aspartate 100, and glutamine 107.

The protein belongs to the methyltransferase superfamily. RsmH family.

The protein resides in the cytoplasm. It catalyses the reaction cytidine(1402) in 16S rRNA + S-adenosyl-L-methionine = N(4)-methylcytidine(1402) in 16S rRNA + S-adenosyl-L-homocysteine + H(+). Functionally, specifically methylates the N4 position of cytidine in position 1402 (C1402) of 16S rRNA. The sequence is that of Ribosomal RNA small subunit methyltransferase H from Legionella pneumophila (strain Paris).